We begin with the raw amino-acid sequence, 184 residues long: ATP-dependent protease subunit HslV (184 aa).

The active site involves T12. Residues A167, C170, and T173 each coordinate Na(+).

The protein belongs to the peptidase T1B family. HslV subfamily. In terms of assembly, a double ring-shaped homohexamer of HslV is capped on each side by a ring-shaped HslU homohexamer. The assembly of the HslU/HslV complex is dependent on binding of ATP.

The protein localises to the cytoplasm. The catalysed reaction is ATP-dependent cleavage of peptide bonds with broad specificity.. Allosterically activated by HslU binding. Functionally, protease subunit of a proteasome-like degradation complex believed to be a general protein degrading machinery. The polypeptide is ATP-dependent protease subunit HslV (Wolbachia pipientis subsp. Culex pipiens (strain wPip)).